The sequence spans 84 residues: Small ribosomal subunit protein uS17 (84 aa).

Belongs to the universal ribosomal protein uS17 family. In terms of assembly, part of the 30S ribosomal subunit.

Its function is as follows. One of the primary rRNA binding proteins, it binds specifically to the 5'-end of 16S ribosomal RNA. The protein is Small ribosomal subunit protein uS17 of Vibrio vulnificus (strain CMCP6).